Reading from the N-terminus, the 464-residue chain is UDP-N-acetylmuramoylalanine--D-glutamate ligase (464 aa).

127 to 133 provides a ligand contact to ATP; it reads GSNGKST.

It belongs to the MurCDEF family.

It localises to the cytoplasm. The enzyme catalyses UDP-N-acetyl-alpha-D-muramoyl-L-alanine + D-glutamate + ATP = UDP-N-acetyl-alpha-D-muramoyl-L-alanyl-D-glutamate + ADP + phosphate + H(+). The protein operates within cell wall biogenesis; peptidoglycan biosynthesis. In terms of biological role, cell wall formation. Catalyzes the addition of glutamate to the nucleotide precursor UDP-N-acetylmuramoyl-L-alanine (UMA). The chain is UDP-N-acetylmuramoylalanine--D-glutamate ligase from Roseobacter denitrificans (strain ATCC 33942 / OCh 114) (Erythrobacter sp. (strain OCh 114)).